The following is a 70-amino-acid chain: Phycobilisome 8.1 kDa linker polypeptide, phycocyanin-associated, rod (70 aa).

Positions 5–63 constitute a CpcD-like domain; that stretch reads SRSFQVEVSGLHQNEVTNQNNYPIRSSGSVFITIPFSRFNEELQRINRLGGKIVNIQPL.

This sequence belongs to the phycobilisome linker protein family.

It is found in the cellular thylakoid membrane. In terms of biological role, rod linker protein, associated with phycocyanin. Linker polypeptides determine the state of aggregation and the location of the disk-shaped phycobiliprotein units within the phycobilisome and modulate their spectroscopic properties in order to mediate a directed and optimal energy transfer. The chain is Phycobilisome 8.1 kDa linker polypeptide, phycocyanin-associated, rod (cpcD3) from Microchaete diplosiphon (Fremyella diplosiphon).